A 42-amino-acid chain; its full sequence is Large ribosomal subunit protein bL36 (42 aa).

The protein belongs to the bacterial ribosomal protein bL36 family.

This Wolbachia pipientis wMel protein is Large ribosomal subunit protein bL36.